A 345-amino-acid chain; its full sequence is N-acetyl-gamma-glutamyl-phosphate reductase (345 aa).

The active site involves cysteine 149.

Belongs to the NAGSA dehydrogenase family. Type 1 subfamily.

It is found in the cytoplasm. The enzyme catalyses N-acetyl-L-glutamate 5-semialdehyde + phosphate + NADP(+) = N-acetyl-L-glutamyl 5-phosphate + NADPH + H(+). It functions in the pathway amino-acid biosynthesis; L-arginine biosynthesis; N(2)-acetyl-L-ornithine from L-glutamate: step 3/4. In terms of biological role, catalyzes the NADPH-dependent reduction of N-acetyl-5-glutamyl phosphate to yield N-acetyl-L-glutamate 5-semialdehyde. The sequence is that of N-acetyl-gamma-glutamyl-phosphate reductase from Marinobacter nauticus (strain ATCC 700491 / DSM 11845 / VT8) (Marinobacter aquaeolei).